Here is a 444-residue protein sequence, read N- to C-terminus: Retinoic acid receptor alpha-A (444 aa).

The interval Met1–Ile71 is modulating. Residues Ser35–His46 show a composition bias toward polar residues. A disordered region spans residues Ser35–Pro67. Residues Ser47–Ile58 are compositionally biased toward low complexity. The segment at residues Tyr72 to Asn147 is a DNA-binding region (nuclear receptor). NR C4-type zinc fingers lie at residues Cys75–Cys95 and Cys111–Cys130. The tract at residues Asp148–Pro169 is hinge. An NR LBD domain is found at Asp170 to Ser404. The 9aaTAD motif lies at Pro395–Asn403. Residues Glu402–Pro444 form a disordered region.

Belongs to the nuclear hormone receptor family. NR1 subfamily. In terms of assembly, heterodimer; with an rxr molecule. Binds DNA preferentially as a rar/rxr heterodimer. In the embryo, zygotic expression largely overlaps that of rarab, with high levels in hindbrain, lateral mesoderm and tail bud. In the adult, strong expression in brain and muscle, weaker expression in ovary, liver and digestive tract.

The protein localises to the nucleus. Functionally, receptor for retinoic acid. Retinoic acid receptors bind as heterodimers to their target response elements in response to their ligands, all-trans or 9-cis retinoic acid, and regulate gene expression in various biological processes. The rar/rxr heterodimers bind to the retinoic acid response elements (RARE) composed of tandem 5'-AGGTCA-3' sites known as DR1-DR5. Required for hindbrain patterning. The sequence is that of Retinoic acid receptor alpha-A from Danio rerio (Zebrafish).